The sequence spans 266 residues: DLA class II histocompatibility antigen, DR-1 beta chain (266 aa).

An N-terminal signal peptide occupies residues 1–29 (MVCLCFLGGSWMTALMLILMVLNPPFAWA). A beta-1 region spans residues 30-124 (RDTPPHFLEV…IESFTVQRRV (95 aa)). At 30-227 (RDTPPHFLEV…RAQSDSAQSK (198 aa)) the chain is on the extracellular side. 2 cysteine pairs are disulfide-bonded: cysteine 44–cysteine 108 and cysteine 146–cysteine 202. A glycan (N-linked (GlcNAc...) asparagine) is linked at asparagine 48. The interval 125-227 (EPTVTVYPTK…RAQSDSAQSK (103 aa)) is beta-2. One can recognise an Ig-like C1-type domain in the interval 126-214 (PTVTVYPTKT…EHPSLTSPVT (89 aa)). A helical transmembrane segment spans residues 228–250 (MLSGIGGFVLGLLFLAVGLFIYF). Residues 251–266 (RNQKGHSGLQPTGLLS) lie on the Cytoplasmic side of the membrane.

It belongs to the MHC class II family.

The protein localises to the membrane. This is DLA class II histocompatibility antigen, DR-1 beta chain from Canis lupus familiaris (Dog).